The chain runs to 643 residues: Galactan 5-O-arabinofuranosyltransferase (643 aa).

A run of 13 helical transmembrane segments spans residues 25-45 (VLVALGQLAAAVVVAVGVAVV), 66-86 (ALTTVGQVGCLAGLVGIGWLW), 97-117 (LGGLVLVSAFTVVTLGMPLGA), 180-200 (FKPWAITSMAIAVAVALVLWW), 205-225 (FEYALLVTVATAAVMLAYSSP), 229-249 (AAMITVLLPPMLVLTWSGLGA), 255-272 (WAAVVGAGVFLGFAATWY), 276-293 (VAYGAFTVVLMALLLAGS), 309-329 (LAVVGAIAAAIGSTTWLPYLL), 355-375 (FPMLQFSLLGAICLLGTLWLV), 384-404 (AGALAIGVLAVYLWSLLSMLA), 420-440 (LSVLLVAAGAFGFVEAVQALG), and 445-465 (GVIPMAAAIGLAGAIAFSQDI). Residues 466-643 (PDVLRPDLTI…LAIRKPQESA (178 aa)) lie on the Extracellular side of the membrane.

It belongs to the glycosyltransferase 85 family.

The protein resides in the cell membrane. The enzyme catalyses Adds an alpha-D-arabinofuranosyl group from trans,octacis-decaprenylphospho-beta-D-arabinofuranose at the 5-O-position of the eighth, tenth and twelfth galactofuranose unit of the galactofuranan chain of [beta-D-galactofuranosyl-(1-&gt;5)-beta-D-galactofuranosyl-(1-&gt;6)]14-beta-D-galactofuranosyl-(1-&gt;5)-beta-D-galactofuranosyl-(1-&gt;4)-alpha-L-rhamnopyranosyl-(1-&gt;3)-N-acetyl-alpha-D-glucosaminyl-diphospho-trans,octacis-decaprenol.. Its pathway is cell wall biogenesis; cell wall polysaccharide biosynthesis. Its function is as follows. Involved in the biosynthesis of the arabinogalactan (AG) region of the mycolylarabinogalactan-peptidoglycan (mAGP) complex, an essential component of the mycobacterial cell wall. Catalyzes the addition of the first key arabinofuranosyl (Araf) residue from the sugar donor decaprenyl-phospho-arabinose (DPA) on the C-5 of a 6-linked galactofuranosyl (Galf) of the galactan domain, thus 'priming' the galactan for further elaboration by other arabinofuranosyltransferases. It is not able to add an Araf residue to a terminal Galf. The polypeptide is Galactan 5-O-arabinofuranosyltransferase (Mycobacterium tuberculosis (strain CDC 1551 / Oshkosh)).